A 560-amino-acid polypeptide reads, in one-letter code: Nuclear hormone receptor family member nhr-8 (560 aa).

Residues methionine 1–proline 21 form a disordered region. A DNA-binding region (nuclear receptor) is located at residues glycine 23 to aspartate 98. NR C4-type zinc fingers lie at residues cysteine 26–cysteine 46 and cysteine 62–cysteine 86. The NR LBD domain occupies aspartate 336–glutamate 560.

The protein belongs to the nuclear hormone receptor family.

It localises to the nucleus. Functionally, orphan nuclear receptor. This chain is Nuclear hormone receptor family member nhr-8 (nhr-8), found in Caenorhabditis elegans.